Reading from the N-terminus, the 430-residue chain is Serine hydroxymethyltransferase (430 aa).

(6S)-5,6,7,8-tetrahydrofolate contacts are provided by residues Leu126 and 130 to 132; that span reads GHL. Lys235 is subject to N6-(pyridoxal phosphate)lysine.

This sequence belongs to the SHMT family. In terms of assembly, homodimer. Requires pyridoxal 5'-phosphate as cofactor.

Its subcellular location is the cytoplasm. It carries out the reaction (6R)-5,10-methylene-5,6,7,8-tetrahydrofolate + glycine + H2O = (6S)-5,6,7,8-tetrahydrofolate + L-serine. Its pathway is one-carbon metabolism; tetrahydrofolate interconversion. The protein operates within amino-acid biosynthesis; glycine biosynthesis; glycine from L-serine: step 1/1. Functionally, catalyzes the reversible interconversion of serine and glycine with tetrahydrofolate (THF) serving as the one-carbon carrier. This reaction serves as the major source of one-carbon groups required for the biosynthesis of purines, thymidylate, methionine, and other important biomolecules. Also exhibits THF-independent aldolase activity toward beta-hydroxyamino acids, producing glycine and aldehydes, via a retro-aldol mechanism. In Leifsonia xyli subsp. xyli (strain CTCB07), this protein is Serine hydroxymethyltransferase.